Reading from the N-terminus, the 394-residue chain is MRNQTFIIVGAGQAGAMAAATLRQQQFDGDIILIGKEYHAPYERPILSKDYLINPEEAPKYLFSEDFYLEKQIDLRIGQLVSQIMPSKHCVVLENGGKLRYDKLLLTMGARARRFPLLDQLGENIYTLRTLDDAQRLRQAVKKDKRILIVGGGVIGLELAATSCELGANVTVIEQADNIMGRCAPPLLQDYLLNRHQEKGVQFFLDTNIVSAQKQGSELVLILNTGEKVIGDIIIYGIGAEFRDQLAADAGLVTDGGIVIDSRCQTSEPDIFAAGDVCLQREPLTGDLQRRETWENANRQATIAAHAMMGLAPPQPGAPWFWTDQWGINIQMVGNMQAEEWHIQGDLQSDKAILFGTENEVLVGAVAINQGREMRNLRKLLANPAQVVSGVEWA.

5-36 (TFIIVGAGQAGAMAAATLRQQQFDGDIILIGK) provides a ligand contact to FAD. 146-174 (RILIVGGGVIGLELAATSCELGANVTVIE) contacts NAD(+).

This sequence belongs to the bacterial ring-hydroxylating dioxygenase ferredoxin reductase family. In terms of assembly, this dioxygenase system consists of four proteins: the two subunits of the hydroxylase component (HcaE and HcaF), a ferredoxin (HcaC) and a ferredoxin reductase (HcaD). The cofactor is FAD.

The catalysed reaction is 2 reduced [2Fe-2S]-[ferredoxin] + NAD(+) + H(+) = 2 oxidized [2Fe-2S]-[ferredoxin] + NADH. Its pathway is aromatic compound metabolism; 3-phenylpropanoate degradation. Part of the multicomponent 3-phenylpropionate dioxygenase, that converts 3-phenylpropionic acid (PP) and cinnamic acid (CI) into 3-phenylpropionate-dihydrodiol (PP-dihydrodiol) and cinnamic acid-dihydrodiol (CI-dihydrodiol), respectively. This chain is 3-phenylpropionate/cinnamic acid dioxygenase ferredoxin--NAD(+) reductase component, found in Photorhabdus laumondii subsp. laumondii (strain DSM 15139 / CIP 105565 / TT01) (Photorhabdus luminescens subsp. laumondii).